The chain runs to 219 residues: Leukocyte surface antigen CD53 (219 aa).

At 1–11 (MGMSSLKLLKY) the chain is on the cytoplasmic side. Residues 12-32 (VLFIFNLLFWVCGCCILGFGI) traverse the membrane as a helical segment. Over 33 to 54 (YFLVQNTYGVLFRNLPFLTLGN) the chain is Extracellular. A helical transmembrane segment spans residues 55–69 (ILVIVGSIIMVVAFL). The Cytoplasmic portion of the chain corresponds to 70-80 (GCMGSIKENKC). Residues 81 to 106 (LLMSFFVLLLIILLAEVTIAILLFVY) traverse the membrane as a helical segment. At 107-181 (EQKLNTLVAE…NKAKSWFHSN (75 aa)) the chain is on the extracellular side. N-linked (GlcNAc...) asparagine glycosylation is found at asparagine 119, asparagine 129, and asparagine 148. A helical transmembrane segment spans residues 182 to 206 (FLYIGIITICVCVIQVLGMSFALTL). Residues 207–219 (NCQIDKTSQALGL) lie on the Cytoplasmic side of the membrane.

This sequence belongs to the tetraspanin (TM4SF) family. In terms of assembly, interacts with SCIMP. Interacts with CD45/PTPRC. Interacts with IL7R. Interacts with RBL2 and PPP2CA.

It is found in the cell membrane. The protein localises to the cell junction. The protein resides in the membrane. In terms of biological role, structural component of specialized membrane microdomains known as tetraspanin-enriched microdomains (TERMs), which act as platforms for receptor clustering and signaling. Participates thereby in diverse biological functions such as cell signal transduction, adhesion, migration and protein trafficking. Plays a role in the activation of monocytes and B-cells. Acts as an essential regulator of B-cell development by promoting interleukin-7 receptor/IL7R signaling. Also promotes, in B-cells, the BCR signaling by recruiting PKC to the plasma membrane in order to phosphorylate its substrates. Plays an essential role in lymphocyte homing to lymph nodes by stabilizing L-selectin/SELL cell surface expression. Also mediates metabolic and inflammatory functions in hepatocytes and adipose tissue by promoting TNF-alpha and LPS signaling independent of the immune compartment. Protects hematopoietic stem cell function in response to stress by facilitating DREAM complex activity through association with p130/RBL2 and its phosphatase PP2A. The chain is Leukocyte surface antigen CD53 (Cd53) from Mus musculus (Mouse).